Reading from the N-terminus, the 149-residue chain is Probable microsomal glutathione S-transferase (149 aa).

A run of 2 helical transmembrane segments spans residues 7–27 (SIFP…IGLW) and 123–143 (LSHI…GSSL).

Belongs to the MAPEG family.

It is found in the membrane. The catalysed reaction is RX + glutathione = an S-substituted glutathione + a halide anion + H(+). Functionally, may perform the conjugation of reduced glutathione to electrophiles. The polypeptide is Probable microsomal glutathione S-transferase (mgst) (Dictyostelium discoideum (Social amoeba)).